Reading from the N-terminus, the 432-residue chain is Glutamyl-tRNA reductase (432 aa).

Residues 49–52 (TCNR), S107, 112–114 (ETQ), and Q118 each bind substrate. Catalysis depends on C50, which acts as the Nucleophile. Residue 186–191 (GAGEMG) participates in NADP(+) binding.

This sequence belongs to the glutamyl-tRNA reductase family. Homodimer.

It carries out the reaction (S)-4-amino-5-oxopentanoate + tRNA(Glu) + NADP(+) = L-glutamyl-tRNA(Glu) + NADPH + H(+). It functions in the pathway porphyrin-containing compound metabolism; protoporphyrin-IX biosynthesis; 5-aminolevulinate from L-glutamyl-tRNA(Glu): step 1/2. Catalyzes the NADPH-dependent reduction of glutamyl-tRNA(Glu) to glutamate 1-semialdehyde (GSA). The polypeptide is Glutamyl-tRNA reductase (Campylobacter jejuni subsp. jejuni serotype O:2 (strain ATCC 700819 / NCTC 11168)).